Consider the following 565-residue polypeptide: Carboxylesterase 1D (565 aa).

An N-terminal signal peptide occupies residues 1–18 (MRLYPLVWLFLAACTAWG). Asn-79 is a glycosylation site (N-linked (GlcNAc...) asparagine). Cys-87 and Cys-116 are disulfide-bonded. Ser-221 functions as the Acyl-ester intermediate in the catalytic mechanism. A disulfide bridge links Cys-273 with Cys-284. Glu-353 (charge relay system) is an active-site residue. Position 382 is an N6-succinyllysine (Lys-382). Catalysis depends on His-466, which acts as the Charge relay system. Asn-489 carries N-linked (GlcNAc...) asparagine glycosylation. Residues 562–565 (HVEL) carry the Prevents secretion from ER motif.

It belongs to the type-B carboxylesterase/lipase family. As to quaternary structure, homotrimer. As to expression, detected in liver, lung and testis, but not in kidney (at protein level).

The protein localises to the endoplasmic reticulum lumen. Its subcellular location is the cytoplasm. It is found in the cytosol. It localises to the lipid droplet. The protein resides in the microsome. It catalyses the reaction all-trans-retinyl hexadecanoate + H2O = all-trans-retinol + hexadecanoate + H(+). It carries out the reaction a carboxylic ester + H2O = an alcohol + a carboxylate + H(+). The catalysed reaction is a long-chain fatty acyl ethyl ester + H2O = a long-chain fatty acid + ethanol + H(+). With respect to regulation, FAEE-synthesizing and PNPB-hydrolyzing activities are both inhibited by DFP. Major lipase in white adipose tissue. Involved in the metabolism of xenobiotics and of natural substrates. Hydrolyzes triacylglycerols and monoacylglycerols, with a preference for monoacylglycerols. The susceptibility of the substrate increases with decreasing acyl chain length of the fatty acid moiety. Catalyzes the synthesis of fatty acid ethyl esters. Hydrolyzes retinyl esters. The protein is Carboxylesterase 1D of Rattus norvegicus (Rat).